Consider the following 235-residue polypeptide: Secretory carrier-associated membrane protein 5 (235 aa).

Residues 1–39 (MAEKVNNFPPLPKFIPLKPCFYQDFEADIPPQHVSMTKR) are Cytoplasmic-facing. The helical transmembrane segment at 40–60 (LYYLWMLNSVTLAVNLVGCLA) threads the bilayer. Residues 61 to 67 (WLIGGGG) lie on the Extracellular side of the membrane. Residues 68–88 (ATNFGLAFLWLILFTPCSYVC) form a helical membrane-spanning segment. At 89 to 102 (WFRPIYKAFKTDSS) the chain is on the cytoplasmic side. A helical membrane pass occupies residues 103–125 (FSFMAFFFTFMAQLVISIIQAVG). Over 126–148 (IPGWGVCGWIATISFFGTNIGSA) the chain is Extracellular. A helical transmembrane segment spans residues 149–169 (VVMLIPTVMFTVMAVFSFIAL). Over 170 to 235 (SMVHKFYRGS…TPNYTYSNEM (66 aa)) the chain is Cytoplasmic.

This sequence belongs to the SCAMP family. SCAMP5 subfamily. In terms of assembly, interacts (via C-terminal part) with SYT1 and SYT2; interaction with synaptotagmins making a link with the SNARE molecules. Interacts with SLC9A7. In terms of tissue distribution, expressed both by neuronal and non-neuronal tissues. Expressed in brain, stomach, thyroid, spinal cord, lymph node, trachea, adrenal gland, bone marrow and in the different parts of brain. In thyroid tissues, it is expressed by the follicular epithelial cells. In the adrenal gland tissues it is detected in the zona fasciculata of the cortex region (at protein level).

The protein resides in the cell membrane. It is found in the golgi apparatus membrane. The protein localises to the golgi apparatus. Its subcellular location is the trans-Golgi network membrane. It localises to the recycling endosome membrane. The protein resides in the cytoplasmic vesicle. It is found in the secretory vesicle. The protein localises to the synaptic vesicle membrane. Required for the calcium-dependent exocytosis of signal sequence-containing cytokines such as CCL5. Probably acts in cooperation with the SNARE machinery. May play a role in accumulation of expanded polyglutamine (polyQ) protein huntingtin (HTT) in case of endoplasmic reticulum stress by inhibiting the endocytosis pathway. This Homo sapiens (Human) protein is Secretory carrier-associated membrane protein 5 (SCAMP5).